A 446-amino-acid polypeptide reads, in one-letter code: Alpha-galacturonidase (446 aa).

10–72 (IKIAYIGGGS…GRWRYEAVST (63 aa)) provides a ligand contact to NAD(+). Asn151 serves as a coordination point for substrate. Cys173 lines the Mn(2+) pocket. His174 functions as the Proton donor in the catalytic mechanism. His210 contacts Mn(2+).

This sequence belongs to the glycosyl hydrolase 4 family. Homotetramer. Requires NAD(+) as cofactor. It depends on Mn(2+) as a cofactor.

It catalyses the reaction [(1-&gt;4)-alpha-D-galacturonosyl](n) + H2O = alpha-D-galacturonate + [(1-&gt;4)-alpha-D-galacturonosyl](n-1). In terms of biological role, alpha-galacturonidase able to catalyze the hydrolysis of the chromogenic substrate p-nitrophenyl-alpha-D-galacturonic acid (pNPalphaGalUA), and of the probable natural substrate alpha-1,4-di-galacturonate (GalUA(2)). Can neither hydrolyze pNPbetaGalUA, nor the stereoisomeric pNPalphaGlcUA. Does not display alpha- or beta-glucosidase activity as it fails to hydrolyze melibiose, raffinose, lactose and the chromogenic analogs, pNPalphaGal and pNPbetaGal. Cannot use the following compounds as substrates: pNP-N-acetyl-alpha- and beta-D-galactosaminide, pNP-N-acetyl-alpha- and beta-D-glucosaminide, pNP-alpha-L- and beta-L-arabinopyranoside, pNP-alpha- and beta-D-glucuronide, pNP-alpha- and beta-D-glucopyranoside, pNP-alpha- and beta-D-glucopyranoside 6-phosphate, pNP-alpha-D-galactopyranoside 6-phosphate and oNP-beta-D-galactopyranoside 6-phosphate. This chain is Alpha-galacturonidase (lplD), found in Bacillus subtilis (strain 168).